Consider the following 206-residue polypeptide: Small ribosomal subunit protein uS4 (206 aa).

The 63-residue stretch at 96–158 folds into the S4 RNA-binding domain; sequence SRLDNVVYRM…AKKQLRIQNA (63 aa).

Belongs to the universal ribosomal protein uS4 family. Part of the 30S ribosomal subunit. Contacts protein S5. The interaction surface between S4 and S5 is involved in control of translational fidelity.

Its function is as follows. One of the primary rRNA binding proteins, it binds directly to 16S rRNA where it nucleates assembly of the body of the 30S subunit. Functionally, with S5 and S12 plays an important role in translational accuracy. This chain is Small ribosomal subunit protein uS4, found in Francisella tularensis subsp. mediasiatica (strain FSC147).